Consider the following 309-residue polypeptide: Xylose/arabinose import permease protein XacI (309 aa).

A run of 6 helical transmembrane segments spans residues 29-49 (LVVFFLGFFLVPLETGIMTAI), 89-109 (LIMSIPATIGSVLFGSMAAYG), 121-141 (MLMLFVVGVFVPYQAVLVPLA), 170-190 (ELVPLVITHIAYGIPICTILF), 227-247 (MFGVVFIYQFTQIYNEFLFAF), and 282-302 (AAFLAAVPTLILYVAFAEQFA). The 213-residue stretch at 85–297 (FFNSLIMSIP…VPTLILYVAF (213 aa)) folds into the ABC transmembrane type-1 domain.

The protein belongs to the binding-protein-dependent transport system permease family. In terms of assembly, the complex is composed of two ATP-binding proteins (XacJ and XacK), two transmembrane proteins (XacH and XacI) and a solute-binding protein (XacG).

It localises to the cell membrane. Part of the ABC transporter complex XacGHIJK involved in the uptake of xylose and arabinose. Responsible for the translocation of the substrate across the membrane. This chain is Xylose/arabinose import permease protein XacI, found in Haloferax volcanii (strain ATCC 29605 / DSM 3757 / JCM 8879 / NBRC 14742 / NCIMB 2012 / VKM B-1768 / DS2) (Halobacterium volcanii).